The primary structure comprises 281 residues: MEMO1 family protein Pars_0062 (281 aa).

It belongs to the MEMO1 family.

The chain is MEMO1 family protein Pars_0062 from Pyrobaculum arsenaticum (strain DSM 13514 / JCM 11321 / PZ6).